A 511-amino-acid polypeptide reads, in one-letter code: S-layer protein B (511 aa).

A signal peptide spans 1–24; the sequence is MVKYMNLIVLGMLMFGVFVTLSLG. A coiled-coil region spans residues 358–392; sequence IQRLQSEVSVLESEVDQLKVEIQSLNETLTLQASE. A helical transmembrane segment spans residues 487–507; it reads GGIILGVIALIIAIVAVVLVF.

It belongs to the Sulfolobales SlaB family. The mushroom-shaped unit cells of the Sulfolobales' S-layers may consist of three SlaB subunits and six SlaA subunits.

It localises to the secreted. The protein resides in the cell wall. The protein localises to the S-layer. It is found in the cell membrane. In terms of biological role, S-layer small protein. May anchor the complex to the cell membrane. This chain is S-layer protein B, found in Acidianus ambivalens (Desulfurolobus ambivalens).